Here is a 284-residue protein sequence, read N- to C-terminus: Tropomyosin alpha-1 chain (284 aa).

An N-acetylmethionine modification is found at Met1. The interval 1-40 (MDAIKKKMQMLKLDKENALDRAEQAESDKKASEDRSKQLE) is disordered. Residues 1–284 (MDAIKKKMQM…DHALNDMTSI (284 aa)) adopt a coiled-coil conformation. The segment covering 12–40 (KLDKENALDRAEQAESDKKASEDRSKQLE) has biased composition (basic and acidic residues).

Homodimer. Heterodimer of an alpha (TPM1, TPM3 or TPM4) and a beta (TPM2) chain.

It is found in the cytoplasm. Its subcellular location is the cytoskeleton. Its function is as follows. Binds to actin filaments in muscle and non-muscle cells. Plays a central role, in association with the troponin complex, in the calcium dependent regulation of vertebrate striated muscle contraction. Smooth muscle contraction is regulated by interaction with caldesmon. In non-muscle cells is implicated in stabilizing cytoskeleton actin filaments. The protein is Tropomyosin alpha-1 chain of Chelon auratus (Golden grey mullet).